Reading from the N-terminus, the 881-residue chain is Armadillo repeat-containing protein 3 (881 aa).

12 ARM repeats span residues aspartate 15 to leucine 54, glutamate 57 to serine 96, serine 98 to valine 138, tyrosine 140 to glutamine 179, phenylalanine 181 to cysteine 220, lysine 222 to glutamate 262, methionine 264 to tyrosine 304, proline 306 to glutamate 345, asparagine 346 to threonine 385, proline 388 to threonine 427, glutamate 429 to cysteine 468, and valine 470 to glycine 509. S-palmitoyl cysteine attachment occurs at residues cysteine 507 and cysteine 518. The tract at residues asparagine 605–serine 659 is disordered. The segment covering aspartate 622–arginine 636 has biased composition (low complexity).

As to quaternary structure, homodimer. Interacts with PIK3C3, PIK3R4 and BECN1. Interacts (via ARM domains) with ATG14. Palmitoylation is important for its function in autophagy. As to expression, testis-specific.

In terms of biological role, essential for male fertility and sperm motility. During spermatogenesis, promotes the autophagic degradation of excessive ribosomes, providing energy resources for mitochondria and thus ensuring sperm flagellar motility. The polypeptide is Armadillo repeat-containing protein 3 (Armc3) (Mus musculus (Mouse)).